Consider the following 102-residue polypeptide: Protein translation factor SUI1 homolog (102 aa).

It belongs to the SUI1 family.

The protein is Protein translation factor SUI1 homolog of Cenarchaeum symbiosum (strain A).